The following is a 107-amino-acid chain: Quaternary ammonium compound-resistance protein QacC (107 aa).

A run of 3 helical transmembrane segments spans residues 26–46 (FSKFIPSLGTIISFGICFYFL), 57–77 (ITYATWAGLGLVLTTVVSIII), and 84–104 (LITIVSIVLIIVGVVSLNIFG).

The protein belongs to the drug/metabolite transporter (DMT) superfamily. Small multidrug resistance (SMR) (TC 2.A.7.1) family.

It localises to the cell membrane. Multidrug exporter. Is implicated for the resistance to bacteriocidal quaternary ammonium compounds. In Staphylococcus sp. (strain ST827), this protein is Quaternary ammonium compound-resistance protein QacC.